We begin with the raw amino-acid sequence, 433 residues long: UDP-N-acetylglucosamine 1-carboxyvinyltransferase (433 aa).

34 to 35 (KN) provides a ligand contact to phosphoenolpyruvate. Residue Arg104 coordinates UDP-N-acetyl-alpha-D-glucosamine. Cys128 serves as the catalytic Proton donor. Cys128 bears the 2-(S-cysteinyl)pyruvic acid O-phosphothioketal mark. 2 residues coordinate UDP-N-acetyl-alpha-D-glucosamine: Asp320 and Ile342.

The protein belongs to the EPSP synthase family. MurA subfamily.

The protein localises to the cytoplasm. The enzyme catalyses phosphoenolpyruvate + UDP-N-acetyl-alpha-D-glucosamine = UDP-N-acetyl-3-O-(1-carboxyvinyl)-alpha-D-glucosamine + phosphate. It participates in cell wall biogenesis; peptidoglycan biosynthesis. Cell wall formation. Adds enolpyruvyl to UDP-N-acetylglucosamine. In Synechococcus sp. (strain CC9605), this protein is UDP-N-acetylglucosamine 1-carboxyvinyltransferase.